The sequence spans 284 residues: Bifunctional protein FolD (284 aa).

NADP(+) is bound by residues 165 to 167 (GRS) and S190.

This sequence belongs to the tetrahydrofolate dehydrogenase/cyclohydrolase family. Homodimer.

The enzyme catalyses (6R)-5,10-methylene-5,6,7,8-tetrahydrofolate + NADP(+) = (6R)-5,10-methenyltetrahydrofolate + NADPH. It catalyses the reaction (6R)-5,10-methenyltetrahydrofolate + H2O = (6R)-10-formyltetrahydrofolate + H(+). The protein operates within one-carbon metabolism; tetrahydrofolate interconversion. Catalyzes the oxidation of 5,10-methylenetetrahydrofolate to 5,10-methenyltetrahydrofolate and then the hydrolysis of 5,10-methenyltetrahydrofolate to 10-formyltetrahydrofolate. This is Bifunctional protein FolD from Streptococcus equi subsp. zooepidemicus (strain MGCS10565).